The following is a 239-amino-acid chain: Sugar fermentation stimulation protein homolog (239 aa).

It belongs to the SfsA family.

This Shewanella woodyi (strain ATCC 51908 / MS32) protein is Sugar fermentation stimulation protein homolog.